The primary structure comprises 364 residues: Inner membrane ABC transporter permease protein YejB (364 aa).

The Periplasmic segment spans residues 1–8 (MGAYLIRR). A helical membrane pass occupies residues 9–29 (LLLVIPTLWAIITINFFIVQI). Over 30-37 (APGGPVDQ) the chain is Cytoplasmic. The chain crosses the membrane as a helical span at residues 38–58 (AIAAIEFGNAGVLPGAGGEGV). The Periplasmic portion of the chain corresponds to 59–135 (RASHAQTGVG…LTLIKDSLPV (77 aa)). In terms of domain architecture, ABC transmembrane type-1 spans 133 to 348 (LPVSITLGLW…LIGLLLNIVS (216 aa)). A helical transmembrane segment spans residues 136–156 (SITLGLWSTLIIYLVSIPLGI). At 157-172 (RKAVYNGSRFDVWSSA) the chain is on the cytoplasmic side. The chain crosses the membrane as a helical span at residues 173–193 (FIIIGYAIPAFLFAILLIVFF). Topologically, residues 194–224 (AGGSYFDLFPLRGLVSANFDSLPWYQKITDY) are periplasmic. Residues 225 to 245 (LWHITLPVLATVIGGFAALTM) form a helical membrane-spanning segment. Topologically, residues 246-284 (LTKNSFLDEVRKQYVVTARAKGVSEKNILWKHVFRNAML) are cytoplasmic. A helical transmembrane segment spans residues 285–305 (LVIAGFPATFISMFFTGSLLI). Residues 306–326 (EVMFSLNGLGLLGYEATVSRD) lie on the Periplasmic side of the membrane. Residues 327–347 (YPVMFGTLYIFTLIGLLLNIV) traverse the membrane as a helical segment. Residues 348–364 (SDISYTLVDPRIDFEGR) are Cytoplasmic-facing.

It belongs to the binding-protein-dependent transport system permease family. OppBC subfamily.

It localises to the cell inner membrane. Functionally, probably part of a binding-protein-dependent transport system. Probably responsible for the translocation of the substrate across the membrane. This is Inner membrane ABC transporter permease protein YejB (yejB) from Escherichia coli O157:H7.